The chain runs to 435 residues: Protein SUPPRESSOR OF K(+) TRANSPORT GROWTH DEFECT 1 (435 aa).

Residues 7–72 (EQAIEYVKQA…LRRAEEIRAV (66 aa)) form the MIT domain. The interval 73–113 (LDEGGSGPGSNGDAAVATRPKTKPKDGEGGGKDGEDPEQSK) is disordered. Over residues 95–113 (KPKDGEGGGKDGEDPEQSK) the composition is skewed to basic and acidic residues. 172 to 179 (GPPGTGKS) is an ATP binding site.

This sequence belongs to the AAA ATPase family. In terms of assembly, monomer or homodimer (in nucleotide-free form). Decamer, dodecamer or tetradecamer of two stacked respective homooligomeric rings (when bound to ATP); the dodecameric form seems to be predominant. Interacts with members of the ESCRT-III subcomplex such as LIP5, VPS60-1, VPS2.1, VPS20.1, VPS20.2, VPS24-1, VPS32.1, VPS32.2, CHMP1A and VPS24. Binds to PROS/At4g24370. In terms of tissue distribution, mostly expressed in leaves, to a lower extent in seeds, and barely in roots and flowers (at protein level). Particularly expressed in trichomes.

Its subcellular location is the cytoplasm. It is found in the nucleus. The protein resides in the endosome. The protein localises to the multivesicular body membrane. It localises to the prevacuolar compartment membrane. It carries out the reaction ATP + H2O = ADP + phosphate + H(+). With respect to regulation, activated by LIP5 and PROS. In terms of biological role, involved in the transport of biosynthetic membrane proteins from the prevacuolar/endosomal compartment to the vacuole. Required for multivesicular body (MVB) protein sorting. Catalyzes the ATP-dependent dissociation of class E VPS proteins from endosomal membranes, such as the disassembly of the ESCRT-III complex. May also regulate cell cycle. Required during seed development for the formation of mucilage in seed coat and testa. Involved in the maintenance of Na(+)/K(+) homeostasis under salt stress. Required for cell expansion. This is Protein SUPPRESSOR OF K(+) TRANSPORT GROWTH DEFECT 1 from Arabidopsis thaliana (Mouse-ear cress).